A 319-amino-acid polypeptide reads, in one-letter code: Red chlorophyll catabolite reductase, chloroplastic (319 aa).

Residues 1-39 constitute a chloroplast transit peptide; the sequence is MAMIFCNTLYSSSSPSYLSPLTSKPSRFSKNLRPRAQFQ. Red chlorophyll catabolite-binding positions include glutamate 154 and 207-209; that span reads YVS. A coiled-coil region spans residues 255–286; the sequence is LERCVKEEEEKIVVGEEERMELERRDKSFRRK. Position 291 (aspartate 291) interacts with red chlorophyll catabolite.

As to quaternary structure, homodimer. Interacts with HCAR. Interacts with SGR1, NYC1, NOL, PPH, PAO and the LHCII complex. Part of a SGR1-CCE-LHCII complex, which acts in chlorophyll breakdown. In terms of tissue distribution, expressed in all tissues tested, including roots.

Its subcellular location is the plastid. The protein resides in the chloroplast stroma. The protein localises to the chloroplast thylakoid membrane. It catalyses the reaction primary fluorescent chlorophyll catabolite + 2 oxidized [2Fe-2S]-[ferredoxin] = red chlorophyll catabolite + 2 reduced [2Fe-2S]-[ferredoxin] + 3 H(+). It functions in the pathway porphyrin-containing compound metabolism; chlorophyll degradation. Its function is as follows. Catalyzes the key reaction of chlorophyll catabolism, porphyrin macrocycle cleavage of pheophorbide a (pheide a) to a primary fluorescent catabolite (pFCC). Works in a two-step reaction with pheophorbide a oxygenase (PaO) by reducing the C20/C1 double bond of the intermediate, RCC. Belongs to the chlorophyll catabolic enzymes (CCEs). The chain is Red chlorophyll catabolite reductase, chloroplastic from Arabidopsis thaliana (Mouse-ear cress).